Consider the following 217-residue polypeptide: Small ribosomal subunit protein uS3 (217 aa).

Residues 38 to 106 (IRKFIQKELA…QVHINIVEIK (69 aa)) form the KH type-2 domain.

Belongs to the universal ribosomal protein uS3 family. In terms of assembly, part of the 30S ribosomal subunit. Forms a tight complex with proteins S10 and S14.

In terms of biological role, binds the lower part of the 30S subunit head. Binds mRNA in the 70S ribosome, positioning it for translation. The protein is Small ribosomal subunit protein uS3 of Streptococcus thermophilus (strain CNRZ 1066).